Reading from the N-terminus, the 590-residue chain is MGIIDNFKSFVHSITTEDHYASYDSPYKNSAVNNVGTTVGGGNSSSRLHELNRLATVNSSSHSLIEGGNNGSRTSLSRNGSSTTVGYRPGLRSSNTNSSELQLQNLNASGQPPLPSIDSLWDRIESWLEEEYPELGDNLNDGVTTADLNEFENDLGCGSLPVEIRQFYKRHDGQFRGGKPTGLVMGLTLLDLEGIIEEYAIWAKVNQRLEKQQYMFQHQQQQQQHQKATSSADASETHGHENKINNSFIANQKSIPPNAIQPYYAHRGWIPFLKDFCGNQIAIDLAPGPQGHWGQIIIFGRDYDTKLVIASNLQEFMFGFVSDLELGNFQIDQNDQDGGFLDGSRNDDDYMIGDGEEDQGELCFRDREQKEFGNSIKGKLTYLEVLKRRALKTFGITNLEKFSTSFTPQRMPHAKPNASGMASPVRAASPSMSGATANTNKSQNPLINMESSSKVALPKETLIDEDEKVPEEPVKKSEVKSVKNTAAAEPEKETKQKDEIIEEKPEVIETPAKEDDKEEEEEEQEEEKEQEKEHENEEAPEDEQNEDAKPLTKTQKKNQSKKAKKQQQKQKQNETNDVEEVAEDLNDVAL.

Disordered stretches follow at residues 59–97 (SSSH…SNTN), 216–239 (FQHQ…ETHG), and 407–590 (TPQR…DVAL). Residues 71–85 (GSRTSLSRNGSSTTV) show a composition bias toward polar residues. Residues 217-226 (QHQQQQQQHQ) are compositionally biased toward low complexity. A compositionally biased stretch (polar residues) spans 430-454 (PSMSGATANTNKSQNPLINMESSSK). Basic and acidic residues-rich tracts occupy residues 470-481 (PEEPVKKSEVKS) and 489-515 (EPEK…AKED). The span at 516-528 (DKEEEEEEQEEEK) shows a compositional bias: acidic residues. The span at 554–568 (TQKKNQSKKAKKQQQ) shows a compositional bias: basic residues. Residues 576-590 (NDVEEVAEDLNDVAL) are compositionally biased toward acidic residues.

The protein belongs to the KNR4/SMI1 family.

The chain is KNR4/SMI1 homolog 2 from Debaryomyces hansenii (strain ATCC 36239 / CBS 767 / BCRC 21394 / JCM 1990 / NBRC 0083 / IGC 2968) (Yeast).